We begin with the raw amino-acid sequence, 100 residues long: Nucleoid-associated protein Cagg_3200 (100 aa).

Belongs to the YbaB/EbfC family. As to quaternary structure, homodimer.

The protein localises to the cytoplasm. The protein resides in the nucleoid. In terms of biological role, binds to DNA and alters its conformation. May be involved in regulation of gene expression, nucleoid organization and DNA protection. The protein is Nucleoid-associated protein Cagg_3200 of Chloroflexus aggregans (strain MD-66 / DSM 9485).